The sequence spans 318 residues: MDARSDLHHYNPYRVFSRAEWASMREDTPMTLDAAEVAALRSMHDRLDLSEVEEIYLPMSRLLSIHVAAMQQLYYAQRRFLGVVERKMPFIIGVAGSVAVGKSTTARVLQALLARWSPRPTVDLVTTDGFLHPNAVLERAGLMQKKGFPESYDLPALLGFLSDIKSGRRKVKAPIYSHLTYDIVPNKFTVIDRPDILIVEGVNVLQTGRLPRDGKAVPVVSDFFDFSVYLDADEPVLRDWYVRRFLALRDTAFHDPRSYFHRYAVLSDEEATATAIAIWERTNLANLEDNILPTRPRATLILKKGADHVVDSVALRRL.

96 to 103 lines the ATP pocket; that stretch reads GSVAVGKS.

The protein belongs to the prokaryotic pantothenate kinase family.

Its subcellular location is the cytoplasm. It carries out the reaction (R)-pantothenate + ATP = (R)-4'-phosphopantothenate + ADP + H(+). It participates in cofactor biosynthesis; coenzyme A biosynthesis; CoA from (R)-pantothenate: step 1/5. This chain is Pantothenate kinase, found in Rhodopseudomonas palustris (strain ATCC BAA-98 / CGA009).